The chain runs to 174 residues: Shikimate kinase 2 (174 aa).

12–17 contributes to the ATP binding site; sequence GCGKTT. Residues T16 and D32 each contribute to the Mg(2+) site. D34, R58, and G79 together coordinate substrate. The tract at residues 112-126 is LID domain; that stretch reads QAAPEEDLRPTLTGK. Residue R120 coordinates ATP. Residue R139 coordinates substrate.

This sequence belongs to the shikimate kinase family. AroL subfamily. In terms of assembly, monomer. Mg(2+) is required as a cofactor.

Its subcellular location is the cytoplasm. It catalyses the reaction shikimate + ATP = 3-phosphoshikimate + ADP + H(+). Its pathway is metabolic intermediate biosynthesis; chorismate biosynthesis; chorismate from D-erythrose 4-phosphate and phosphoenolpyruvate: step 5/7. Catalyzes the specific phosphorylation of the 3-hydroxyl group of shikimic acid using ATP as a cosubstrate. The sequence is that of Shikimate kinase 2 from Shigella boydii serotype 4 (strain Sb227).